A 285-amino-acid chain; its full sequence is Transcription initiation factor IIE subunit beta (285 aa).

2 stretches are compositionally biased toward polar residues: residues 1-10 (MSSLSDQLSS) and 33-44 (TPTAYLNSNDGH). The segment at 1–56 (MSSLSDQLSSFKKKVANQPIYAKPQPRQPASPTPTAYLNSNDGHSSAASSPGSYSL) is disordered. The segment covering 45–55 (SSAASSPGSYS) has biased composition (low complexity). A DNA-binding region (TFIIE beta) is located at residues 67–142 (YSQPADSGVG…FTFKPLHNIR (76 aa)). A disordered region spans residues 240-272 (PTSVDPSTVKRAGHNQTPKQKKPKTRRGKITNT). Residues 258 to 268 (KQKKPKTRRGK) are compositionally biased toward basic residues.

The protein belongs to the TFIIE beta subunit family. TFIIE is a tetramer of two alpha (tfa1) and two beta (tfa2) subunits. TFIIE associates with RNA polymerase II via the beta subunit.

It localises to the nucleus. Functionally, recruits TFIIH to the initiation complex and stimulates the RNA polymerase II C-terminal domain kinase and DNA-dependent ATPase activities of TFIIH. Both TFIIH and TFIIE are required for promoter clearance by RNA polymerase. The polypeptide is Transcription initiation factor IIE subunit beta (tfa2) (Schizosaccharomyces pombe (strain 972 / ATCC 24843) (Fission yeast)).